The primary structure comprises 766 residues: Single-minded homolog 1 (766 aa).

The 53-residue stretch at 1-53 (MKEKSKNAARTRREKENSEFYELAKLLPLPSAITSQLDKASIIRLTTSYLKMR) folds into the bHLH domain. 2 PAS domains span residues 77-147 (GREL…QPYH) and 218-288 (PPSA…LVKG). The region spanning 292-335 (TKYYRFLAKHGGWVWVQSYATIVHNSRSSRPHCIVSVNYVLTDT) is the PAC domain. The region spanning 336–766 (EYKGLQLSLD…GTSVIITNGS (431 aa)) is the Single-minded C-terminal domain. Over residues 353 to 365 (AFSYTSSSTPTMT) the composition is skewed to polar residues. Disordered regions lie at residues 353-431 (AFSY…SQHD) and 528-563 (WDEDSVVSSPDPGSASESGDRYRTEQYQSSPHEPSK). The Nuclear localization signal motif lies at 368-387 (RKGAKSRLSSSKSKSRTSPY). Over residues 373 to 385 (SRLSSSKSKSRTS) the composition is skewed to low complexity. The segment covering 394–404 (HTERSESDHDS) has biased composition (basic and acidic residues).

In terms of assembly, efficient DNA binding requires dimerization with another bHLH protein. Heterodimer; forms a heterodimer with ARNT, ARNT2.

The protein resides in the nucleus. Transcriptional factor that may have pleiotropic effects during embryogenesis and in the adult. This Pan paniscus (Pygmy chimpanzee) protein is Single-minded homolog 1 (SIM1).